The chain runs to 692 residues: UvrABC system protein B (692 aa).

The Helicase ATP-binding domain maps to 32 to 187; it reads ENIENGEKAQ…LLNDLVGIQF (156 aa). ATP is bound at residue 45-52; it reads GATGTGKT. A Beta-hairpin motif is present at residues 98–121; that stretch reads YYDYYQPEAYVPSSDTYIEKDSSV. The 196-residue stretch at 436-631 folds into the Helicase C-terminal domain; that stretch reads QIDDLVGEIH…TIKKEIRDLI (196 aa). Residues 656-691 form the UVR domain; the sequence is KALVKKLEKEMQQAAAALDFEGAAQLRDMVLELRAM.

It belongs to the UvrB family. In terms of assembly, forms a heterotetramer with UvrA during the search for lesions. Interacts with UvrC in an incision complex.

The protein localises to the cytoplasm. Functionally, the UvrABC repair system catalyzes the recognition and processing of DNA lesions. A damage recognition complex composed of 2 UvrA and 2 UvrB subunits scans DNA for abnormalities. Upon binding of the UvrA(2)B(2) complex to a putative damaged site, the DNA wraps around one UvrB monomer. DNA wrap is dependent on ATP binding by UvrB and probably causes local melting of the DNA helix, facilitating insertion of UvrB beta-hairpin between the DNA strands. Then UvrB probes one DNA strand for the presence of a lesion. If a lesion is found the UvrA subunits dissociate and the UvrB-DNA preincision complex is formed. This complex is subsequently bound by UvrC and the second UvrB is released. If no lesion is found, the DNA wraps around the other UvrB subunit that will check the other stand for damage. In Lactococcus lactis subsp. cremoris (strain MG1363), this protein is UvrABC system protein B.